Reading from the N-terminus, the 109-residue chain is A-type ATP synthase subunit F (109 aa).

Belongs to the V-ATPase F subunit family. In terms of assembly, has multiple subunits with at least A(3), B(3), C, D, E, F, H, I and proteolipid K(x).

Its subcellular location is the cell membrane. In terms of biological role, component of the A-type ATP synthase that produces ATP from ADP in the presence of a proton gradient across the membrane. This is A-type ATP synthase subunit F from Haloquadratum walsbyi (strain DSM 16790 / HBSQ001).